The primary structure comprises 159 residues: RNA pyrophosphohydrolase (159 aa).

The 144-residue stretch at 6–149 folds into the Nudix hydrolase domain; the sequence is GFRPNVGIIL…KREVYRRALK (144 aa). A Nudix box motif is present at residues 38–59; the sequence is GGINPDETPEDALYRELNEEVG.

Belongs to the Nudix hydrolase family. RppH subfamily. Requires a divalent metal cation as cofactor.

Accelerates the degradation of transcripts by removing pyrophosphate from the 5'-end of triphosphorylated RNA, leading to a more labile monophosphorylated state that can stimulate subsequent ribonuclease cleavage. This Pseudomonas putida (strain ATCC 700007 / DSM 6899 / JCM 31910 / BCRC 17059 / LMG 24140 / F1) protein is RNA pyrophosphohydrolase.